The chain runs to 132 residues: UPF0299 membrane protein YohJ (132 aa).

4 helical membrane passes run Ile8–Ile28, Leu31–Ala51, Gly63–Met83, and Phe93–Trp113.

Belongs to the UPF0299 family.

It localises to the cell inner membrane. The polypeptide is UPF0299 membrane protein YohJ (Escherichia fergusonii (strain ATCC 35469 / DSM 13698 / CCUG 18766 / IAM 14443 / JCM 21226 / LMG 7866 / NBRC 102419 / NCTC 12128 / CDC 0568-73)).